The following is a 516-amino-acid chain: Protein phosphatase 1H (516 aa).

2 disordered regions span residues 102–122 (ADPS…PSGD) and 181–202 (PPTC…SGSQ). The 401-residue stretch at 106-506 (SVSYTPSRRR…DDISVFIIPL (401 aa)) folds into the PPM-type phosphatase domain. The segment covering 190-202 (PNPQLHASASGSQ) has biased composition (polar residues).

This sequence belongs to the PP2C family.

The protein localises to the nucleus. It localises to the cytoplasm. It carries out the reaction O-phospho-L-seryl-[protein] + H2O = L-seryl-[protein] + phosphate. It catalyses the reaction O-phospho-L-threonyl-[protein] + H2O = L-threonyl-[protein] + phosphate. This Danio rerio (Zebrafish) protein is Protein phosphatase 1H (ppm1h).